The chain runs to 83 residues: UPF0297 protein CKR_1221 (83 aa).

Belongs to the UPF0297 family.

This chain is UPF0297 protein CKR_1221, found in Clostridium kluyveri (strain NBRC 12016).